The sequence spans 129 residues: Mediator of RNA polymerase II transcription subunit 31-B (129 aa).

It belongs to the Mediator complex subunit 31 family. In terms of assembly, component of the Mediator complex.

It is found in the nucleus. Component of the Mediator complex, a coactivator involved in the regulated transcription of nearly all RNA polymerase II-dependent genes. Mediator functions as a bridge to convey information from gene-specific regulatory proteins to the basal RNA polymerase II transcription machinery. Mediator is recruited to promoters by direct interactions with regulatory proteins and serves as a scaffold for the assembly of a functional preinitiation complex with RNA polymerase II and the general transcription factors. This Xenopus laevis (African clawed frog) protein is Mediator of RNA polymerase II transcription subunit 31-B (med31-b).